A 205-amino-acid polypeptide reads, in one-letter code: Holliday junction branch migration complex subunit RuvA (205 aa).

The tract at residues 1–64 (MIGRLRGTLA…EDAHLLYGFA (64 aa)) is domain I. The interval 65–143 (EKRERELFRE…AWETSPAMFT (79 aa)) is domain II. Positions 144–154 (LVSDGPLPVAS) are flexible linker. Residues 154 to 205 (SESSAEADAVSALVSLGYKPQEASKAIAAIKDKAGLSSEELIRRSLKGMISK) are domain III.

It belongs to the RuvA family. As to quaternary structure, homotetramer. Forms an RuvA(8)-RuvB(12)-Holliday junction (HJ) complex. HJ DNA is sandwiched between 2 RuvA tetramers; dsDNA enters through RuvA and exits via RuvB. An RuvB hexamer assembles on each DNA strand where it exits the tetramer. Each RuvB hexamer is contacted by two RuvA subunits (via domain III) on 2 adjacent RuvB subunits; this complex drives branch migration. In the full resolvosome a probable DNA-RuvA(4)-RuvB(12)-RuvC(2) complex forms which resolves the HJ.

The protein localises to the cytoplasm. Its function is as follows. The RuvA-RuvB-RuvC complex processes Holliday junction (HJ) DNA during genetic recombination and DNA repair, while the RuvA-RuvB complex plays an important role in the rescue of blocked DNA replication forks via replication fork reversal (RFR). RuvA specifically binds to HJ cruciform DNA, conferring on it an open structure. The RuvB hexamer acts as an ATP-dependent pump, pulling dsDNA into and through the RuvAB complex. HJ branch migration allows RuvC to scan DNA until it finds its consensus sequence, where it cleaves and resolves the cruciform DNA. The protein is Holliday junction branch migration complex subunit RuvA of Pseudomonas putida (strain ATCC 47054 / DSM 6125 / CFBP 8728 / NCIMB 11950 / KT2440).